The sequence spans 217 residues: Octanoyltransferase (217 aa).

The 176-residue stretch at 32–207 folds into the BPL/LPL catalytic domain; sequence SESHDELWIV…TFSQLLGYQH (176 aa). Residues 71 to 78, 138 to 140, and 151 to 153 contribute to the substrate site; these read RGGQVTYH, SLG, and GLA. Cys169 (acyl-thioester intermediate) is an active-site residue.

Belongs to the LipB family.

It localises to the cytoplasm. The catalysed reaction is octanoyl-[ACP] + L-lysyl-[protein] = N(6)-octanoyl-L-lysyl-[protein] + holo-[ACP] + H(+). The protein operates within protein modification; protein lipoylation via endogenous pathway; protein N(6)-(lipoyl)lysine from octanoyl-[acyl-carrier-protein]: step 1/2. Functionally, catalyzes the transfer of endogenously produced octanoic acid from octanoyl-acyl-carrier-protein onto the lipoyl domains of lipoate-dependent enzymes. Lipoyl-ACP can also act as a substrate although octanoyl-ACP is likely to be the physiological substrate. This is Octanoyltransferase from Shewanella baltica (strain OS223).